The chain runs to 455 residues: Phosphoglucosamine mutase (455 aa).

The Phosphoserine intermediate role is filled by S104. The Mg(2+) site is built by S104, D243, D245, and D247. S104 carries the phosphoserine modification.

Belongs to the phosphohexose mutase family. Requires Mg(2+) as cofactor. In terms of processing, activated by phosphorylation.

The enzyme catalyses alpha-D-glucosamine 1-phosphate = D-glucosamine 6-phosphate. Functionally, catalyzes the conversion of glucosamine-6-phosphate to glucosamine-1-phosphate. In Synechococcus sp. (strain CC9311), this protein is Phosphoglucosamine mutase.